Consider the following 219-residue polypeptide: Thymidylate kinase (219 aa).

Residue 9–16 coordinates ATP; that stretch reads GIEGCGKT.

The protein belongs to the thymidylate kinase family.

The catalysed reaction is dTMP + ATP = dTDP + ADP. Functionally, phosphorylation of dTMP to form dTDP in both de novo and salvage pathways of dTTP synthesis. The chain is Thymidylate kinase from Syntrophus aciditrophicus (strain SB).